The sequence spans 324 residues: Homocysteine S-methyltransferase 1 (324 aa).

The region spanning 6 to 320 (IKELIVEHPG…KDIAEIASAV (315 aa)) is the Hcy-binding domain. Residues C238, C305, and C306 each coordinate Zn(2+).

Zn(2+) is required as a cofactor.

It is found in the cytoplasm. It carries out the reaction S-methyl-L-methionine + L-homocysteine = 2 L-methionine + H(+). In terms of biological role, homocysteine S-methyltransferase involved in the conversion of S-adenosylmethionine (AdoMet) to methionine to control the methionine/AdoMet ratio. Also converts S-methylmethionine (SMM) to methionine. This chain is Homocysteine S-methyltransferase 1 (MHT1), found in Saccharomyces cerevisiae (strain ATCC 204508 / S288c) (Baker's yeast).